A 604-amino-acid polypeptide reads, in one-letter code: Elongation factor 4 (604 aa).

The tr-type G domain maps to 8-190 (KNKRNFSIIA…AIVHRIPAPN (183 aa)). Residues 20–25 (DHGKST) and 137–140 (NKID) each bind GTP.

This sequence belongs to the TRAFAC class translation factor GTPase superfamily. Classic translation factor GTPase family. LepA subfamily.

Its subcellular location is the cell inner membrane. It carries out the reaction GTP + H2O = GDP + phosphate + H(+). Its function is as follows. Required for accurate and efficient protein synthesis under certain stress conditions. May act as a fidelity factor of the translation reaction, by catalyzing a one-codon backward translocation of tRNAs on improperly translocated ribosomes. Back-translocation proceeds from a post-translocation (POST) complex to a pre-translocation (PRE) complex, thus giving elongation factor G a second chance to translocate the tRNAs correctly. Binds to ribosomes in a GTP-dependent manner. In Fusobacterium nucleatum subsp. nucleatum (strain ATCC 25586 / DSM 15643 / BCRC 10681 / CIP 101130 / JCM 8532 / KCTC 2640 / LMG 13131 / VPI 4355), this protein is Elongation factor 4.